A 445-amino-acid chain; its full sequence is MSKEYFGTDGIRGRVGEGPITPEFMLKLGWAAGRVFRQEGRRNRVLIGKDTRISGYIFESALESGLAAAGVDVAMLGPMPTPAIAYLTRTFRACAGIVISASHNPFNDNGVKFFSAEGTKLPDSTEEQIEHFIRQPMEIVPSSQLGKAARFEDAKGRYIEFCKSTVPFHMSFAGMRVVLDCAQGATYQVAPSVFKELGAKVETIGVTPDGLNINHEIGSTHPDQLAAKVVEAGADLGIAFDGDGDRVVMVDHKGEIVDGDEILYIIARDKMRKGRLKGGVVGTLMTNFGAELAFGELGIPFERANVGDRYVMEALLRNDWCLGGEGSGHIVCLDRTTTGDGIISSLQVLAALSDLGITLHEAKKGMSKLPQHMINVRVSQKVDIKGHTTIQSAVANAEKQFAGKGRVLLRSSGTEPVIRVMAEGEDEAKVRSIVAELAKIVEGSV.

The active-site Phosphoserine intermediate is the serine 102. Serine 102, aspartate 241, aspartate 243, and aspartate 245 together coordinate Mg(2+). Serine 102 carries the phosphoserine modification.

Belongs to the phosphohexose mutase family. It depends on Mg(2+) as a cofactor. Post-translationally, activated by phosphorylation.

The enzyme catalyses alpha-D-glucosamine 1-phosphate = D-glucosamine 6-phosphate. Catalyzes the conversion of glucosamine-6-phosphate to glucosamine-1-phosphate. This is Phosphoglucosamine mutase from Hahella chejuensis (strain KCTC 2396).